The sequence spans 624 residues: MQPDPRPSGAGACSRFLPLRSQCPEGAGDAVMYASTECKAEVTPSQHGNRTFSYTLEDHTKQAFGIMNELRLSQQLCDVTLQVKYQDAPAAQFMAHKVVLASSSPVFKAMFTNGLREQGMEVVSIEGIHPKVMERLIEFAYTASISMGEKCVLHVMNGAVMYQIDSVVRACSDFLVQQLDPSNAIGIANFAEQIGCVELHQRAREYIYMHFGEVTKQEEFFNLSHCQLVTLISRDDLNVRCESEVFHACINWVKYDCEQRRFYVQALLRAVRCHSLTPNFLQMQLQKCEILQSDSRCKDYLVKIFEELTLHKPTQVMPCRAPKVGRLIYTAGGYFRQSLSYLEAYNPSDGTWLRLADLQVPRSGLAGCVVGGLLYAVGGRNNSPDGNTDSSALDCYNPMTNQWSPCAPMSVPRNRIGVGVIDGHIYAVGGSHGCIHHNSVERYEPERDEWHLVAPMLTRRIGVGVAVLNRLLYAVGGFDGTNRLNSAECYYPERNEWRMITAMNTIRSGAGVCVLHNCIYAAGGYDGQDQLNSVERYDVETETWTFVAPMKHRRSALGITVHQGRIYVLGGYDGHTFLDSVECYDPDTDTWSEVTRMTSGRSGVGVAVTMEPCRKQIDQQNCTC.

Cys-38 carries the S-(2-succinyl)cysteine modification. Residues 77 to 149 (CDVTLQVKYQ…AYTASISMGE (73 aa)) form the BTB domain. Arg-135 is covalently cross-linked (N5-[4-(S-L-cysteinyl)-5-methyl-1H-imidazol-2-yl]-L-ornithine (Arg-Cys) (interchain with C-151 in KEAP1)). S-(2-succinyl)cysteine occurs at positions 151 and 241. Position 151 is an S-(2,3-dicarboxypropyl)cysteine; alternate (Cys-151). Cys-151 carries the S-nitrosocysteine; alternate modification. Residue Cys-151 forms an N5-[4-(S-L-cysteinyl)-5-methyl-1H-imidazol-2-yl]-L-ornithine (Cys-Arg) (interchain with R-135 in KEAP1) linkage. One can recognise a BACK domain in the interval 184–286 (AIGIANFAEQ…TPNFLQMQLQ (103 aa)). 2 positions are modified to S-(2,3-dicarboxypropyl)cysteine: Cys-257 and Cys-273. An S-(2-succinyl)cysteine mark is found at Cys-288 and Cys-319. Cys-288 is modified (S-(2,3-dicarboxypropyl)cysteine; alternate). Kelch repeat units follow at residues 327–372 (LIYT…VVGG), 373–423 (LLYA…VIDG), 424–470 (HIYA…VLNR), 471–517 (LLYA…VLHN), 518–564 (CIYA…VHQG), and 565–611 (RIYV…VTME). The residue at position 434 (Cys-434) is an S-cGMP-cysteine. Cys-613 is modified (S-(2-succinyl)cysteine).

It belongs to the KEAP1 family. In terms of assembly, component of the BCR(KEAP1) E3 ubiquitin ligase complex, at least composed of 2 molecules of CUL3, 2 molecules of KEAP1, and RBX1. Interacts with NFE2L2/NRF2; the interaction is direct. Forms a ternary complex with NFE2L2/NRF2 and PGAM5. Interacts with (phosphorylated) SQSTM1/p62; the interaction is direct and inactivates the BCR(KEAP1) complex by sequestering it in inclusion bodies, promoting its degradation. Interacts with NFE2L1. Interacts with BPTF and PTMA. Interacts with MAP1LC3B. Interacts indirectly with ENC1. Interacts with SESN1 and SESN2. Interacts with HSP90AA1 and HSP90AB1. Interacts with PGCKA1; this interaction prevents the ubiquitination of KEAP1 by TRIM25, thus protecting KEAP1 from degradation. In terms of processing, non-enzymatic covalent modifications of reactive cysteines by electrophile metabolites inactivate the BCR(KEAP1) complex. Accumulation of fumarate promotes the formation of cysteine S-succination (S-(2-succinyl)cysteine), leading to inactivate the BCR(KEAP1) complex and promote NFE2L2/NRF2 nuclear accumulation and activation. Nitric oxide-dependent 8-Nitro-cGMP formation promotes cysteine guanylation (S-cGMP-cysteine), leading to NFE2L2/NRF2 nuclear accumulation and activation. Itaconate, an anti-inflammatory metabolite generated in response to lipopolysaccharide, alkylates cysteines, activating NFE2L2/NRF2. Methylglyoxal, a reactive metabolite that accumulates when the glycolytic enzyme PGK1 is inhibited, promotes formation of a methylimidazole cross-link between proximal Cys-151 and Arg-135 on another KEAP1 molecule, resulting in an inactive dimer that inactivates the BCR(KEAP1) complex. Post-translationally, degraded via a proteasomal-independent process during selective autophagy: interaction with phosphorylated SQSTM1/p62 sequesters KEAP1 in inclusion bodies, leading to its degradation. Auto-ubiquitinated by the BCR(KEAP1) complex. Quinone-induced oxidative stress, but not sulforaphane, increases its ubiquitination. Ubiquitination and subsequent degradation is most pronounced following prolonged exposure of cells to oxidative stress, particularly in glutathione-deficient cells that are highly susceptible to oxidative stress. Deubiquitinated by USP25; leading to stabilization. Ubiquitinated by TRIM25; leading to degradation upon ER stress.

It localises to the cytoplasm. The protein resides in the nucleus. It functions in the pathway protein modification; protein ubiquitination. Ubiquitin ligase activity of the BCR(KEAP1) complex is inhibited by oxidative stress and electrophile metabolites such as sulforaphane. Electrophile metabolites react with reactive cysteine residues in KEAP1 and trigger non-enzymatic covalent modifications of these cysteine residues, leading to inactivate the ubiquitin ligase activity of the BCR(KEAP1) complex. Selective autophagy also inactivates the BCR(KEAP1) complex via interaction between KEAP1 and SQSTM1/p62, which sequesters the complex in inclusion bodies and promotes its degradation. Substrate-specific adapter of a BCR (BTB-CUL3-RBX1) E3 ubiquitin ligase complex that regulates the response to oxidative stress by targeting NFE2L2/NRF2 for ubiquitination. KEAP1 acts as a key sensor of oxidative and electrophilic stress: in normal conditions, the BCR(KEAP1) complex mediates ubiquitination and degradation of NFE2L2/NRF2, a transcription factor regulating expression of many cytoprotective genes. In response to oxidative stress, different electrophile metabolites trigger non-enzymatic covalent modifications of highly reactive cysteine residues in KEAP1, leading to inactivate the ubiquitin ligase activity of the BCR(KEAP1) complex, promoting NFE2L2/NRF2 nuclear accumulation and expression of phase II detoxifying enzymes. In response to selective autophagy, KEAP1 is sequestered in inclusion bodies following its interaction with SQSTM1/p62, leading to inactivation of the BCR(KEAP1) complex and activation of NFE2L2/NRF2. The BCR(KEAP1) complex also mediates ubiquitination of SQSTM1/p62, increasing SQSTM1/p62 sequestering activity and degradation. The BCR(KEAP1) complex also targets BPTF and PGAM5 for ubiquitination and degradation by the proteasome. This chain is Kelch-like ECH-associated protein 1, found in Pongo abelii (Sumatran orangutan).